A 195-amino-acid polypeptide reads, in one-letter code: Probable chemoreceptor glutamine deamidase CheD 2 (195 aa).

The protein belongs to the CheD family.

The catalysed reaction is L-glutaminyl-[protein] + H2O = L-glutamyl-[protein] + NH4(+). In terms of biological role, probably deamidates glutamine residues to glutamate on methyl-accepting chemotaxis receptors (MCPs), playing an important role in chemotaxis. This Burkholderia thailandensis (strain ATCC 700388 / DSM 13276 / CCUG 48851 / CIP 106301 / E264) protein is Probable chemoreceptor glutamine deamidase CheD 2.